The chain runs to 368 residues: 2-deoxy-scyllo-inosose synthase (368 aa).

NAD(+) contacts are provided by residues aspartate 42, 72–75 (EEYK), 104–108 (GLTGN), 128–129 (TT), 139–141 (SIK), 150–151 (KN), and glutamine 176. The active site involves lysine 141. Residue glutamate 183 participates in Co(2+) binding. Glutamate 243 is a catalytic residue. Co(2+)-binding residues include histidine 246 and histidine 262.

It belongs to the sugar phosphate cyclases superfamily. DOI synthase family. As to quaternary structure, was isolated as a heterodimeric enzyme comprising of BtrC and a smaller polypeptide further identified as PdxT by sequence homology. Homodimer in solution. It depends on NAD(+) as a cofactor. Requires Co(2+) as cofactor.

It carries out the reaction D-glucose 6-phosphate = 2-deoxy-L-scyllo-inosose + phosphate. Its pathway is metabolic intermediate biosynthesis; 2-deoxystreptamine biosynthesis; 2-deoxystreptamine from D-glucose 6-phosphate: step 1/4. It functions in the pathway antibiotic biosynthesis; butirosin biosynthesis. Strongly inhibited by EDTA, zinc and Cu(2+). In terms of biological role, catalyzes the intramolecular carbocycle formation from D-glucose-6-phosphate to 2-deoxy-scyllo-inosose (DOI). The sequence is that of 2-deoxy-scyllo-inosose synthase (btrC) from Niallia circulans (Bacillus circulans).